Consider the following 214-residue polypeptide: Superoxide dismutase [Mn] (214 aa).

Residues histidine 27, histidine 82, aspartate 169, and histidine 173 each coordinate Mn(2+).

This sequence belongs to the iron/manganese superoxide dismutase family. As to quaternary structure, homodimer. The cofactor is Mn(2+).

It carries out the reaction 2 superoxide + 2 H(+) = H2O2 + O2. Functionally, destroys superoxide anion radicals which are normally produced within the cells and which are toxic to biological systems. The polypeptide is Superoxide dismutase [Mn] (sodA) (Pasteurella multocida (strain Pm70)).